We begin with the raw amino-acid sequence, 361 residues long: Phospho-N-acetylmuramoyl-pentapeptide-transferase (361 aa).

10 consecutive transmembrane segments (helical) span residues 28 to 48 (LAII…IKFL), 74 to 94 (TMGG…LADL), 99 to 119 (IWIT…DDYA), 133 to 153 (SKFL…EYLD), 168 to 188 (LSLD…VGSS), 203 to 223 (VPIA…GNLI), 236 to 256 (TGEL…FLWF), 263 to 283 (VFMG…ISVI), 288 to 308 (IVLA…ILQV), and 338 to 358 (KVVI…LSSL).

It belongs to the glycosyltransferase 4 family. MraY subfamily. Mg(2+) is required as a cofactor.

The protein resides in the cell inner membrane. The catalysed reaction is UDP-N-acetyl-alpha-D-muramoyl-L-alanyl-gamma-D-glutamyl-meso-2,6-diaminopimeloyl-D-alanyl-D-alanine + di-trans,octa-cis-undecaprenyl phosphate = di-trans,octa-cis-undecaprenyl diphospho-N-acetyl-alpha-D-muramoyl-L-alanyl-D-glutamyl-meso-2,6-diaminopimeloyl-D-alanyl-D-alanine + UMP. The protein operates within cell wall biogenesis; peptidoglycan biosynthesis. In terms of biological role, catalyzes the initial step of the lipid cycle reactions in the biosynthesis of the cell wall peptidoglycan: transfers peptidoglycan precursor phospho-MurNAc-pentapeptide from UDP-MurNAc-pentapeptide onto the lipid carrier undecaprenyl phosphate, yielding undecaprenyl-pyrophosphoryl-MurNAc-pentapeptide, known as lipid I. In Rickettsia prowazekii (strain Madrid E), this protein is Phospho-N-acetylmuramoyl-pentapeptide-transferase.